The chain runs to 77 residues: UPF0291 protein Bsph_1689 (77 aa).

This sequence belongs to the UPF0291 family.

The protein resides in the cytoplasm. This is UPF0291 protein Bsph_1689 from Lysinibacillus sphaericus (strain C3-41).